We begin with the raw amino-acid sequence, 190 residues long: GTP cyclohydrolase 1 (190 aa).

Cysteine 80, histidine 83, and cysteine 151 together coordinate Zn(2+).

It belongs to the GTP cyclohydrolase I family. Toroid-shaped homodecamer, composed of two pentamers of five dimers.

The catalysed reaction is GTP + H2O = 7,8-dihydroneopterin 3'-triphosphate + formate + H(+). It participates in cofactor biosynthesis; 7,8-dihydroneopterin triphosphate biosynthesis; 7,8-dihydroneopterin triphosphate from GTP: step 1/1. The protein is GTP cyclohydrolase 1 (folE) of Rickettsia prowazekii (strain Madrid E).